Here is a 152-residue protein sequence, read N- to C-terminus: UPF0266 membrane protein YobD (152 aa).

A run of 3 helical transmembrane segments spans residues 6-26 (LVLILFIAALLAFAIYDQFIM), 45-65 (IDSVIFVGLIVILIYNNVTNH), and 67-87 (ALITTWLLSALALMGFYIFWI).

This sequence belongs to the UPF0266 family.

It localises to the cell inner membrane. In Escherichia coli O45:K1 (strain S88 / ExPEC), this protein is UPF0266 membrane protein YobD.